A 316-amino-acid chain; its full sequence is Transaldolase (316 aa).

Catalysis depends on K132, which acts as the Schiff-base intermediate with substrate.

This sequence belongs to the transaldolase family. Type 1 subfamily. As to quaternary structure, homodimer.

It is found in the cytoplasm. The enzyme catalyses D-sedoheptulose 7-phosphate + D-glyceraldehyde 3-phosphate = D-erythrose 4-phosphate + beta-D-fructose 6-phosphate. Its pathway is carbohydrate degradation; pentose phosphate pathway; D-glyceraldehyde 3-phosphate and beta-D-fructose 6-phosphate from D-ribose 5-phosphate and D-xylulose 5-phosphate (non-oxidative stage): step 2/3. Transaldolase is important for the balance of metabolites in the pentose-phosphate pathway. The sequence is that of Transaldolase from Methylobacillus flagellatus (strain ATCC 51484 / DSM 6875 / VKM B-1610 / KT).